The following is a 55-amino-acid chain: Large ribosomal subunit protein bL33 (55 aa).

Belongs to the bacterial ribosomal protein bL33 family.

The polypeptide is Large ribosomal subunit protein bL33 (Agrobacterium fabrum (strain C58 / ATCC 33970) (Agrobacterium tumefaciens (strain C58))).